Consider the following 125-residue polypeptide: Large ribosomal subunit protein bL12 (125 aa).

The protein belongs to the bacterial ribosomal protein bL12 family. In terms of assembly, homodimer. Part of the ribosomal stalk of the 50S ribosomal subunit. Forms a multimeric L10(L12)X complex, where L10 forms an elongated spine to which 2 to 4 L12 dimers bind in a sequential fashion. Binds GTP-bound translation factors.

Functionally, forms part of the ribosomal stalk which helps the ribosome interact with GTP-bound translation factors. Is thus essential for accurate translation. The protein is Large ribosomal subunit protein bL12 of Sinorhizobium medicae (strain WSM419) (Ensifer medicae).